A 239-amino-acid polypeptide reads, in one-letter code: Major centromere autoantigen B (239 aa).

The tract at residues 28-185 is disordered; that stretch reads AGFGGGPNAT…DDEVPVPSFG (158 aa). Residues Thr37 and Thr39 each carry the phosphothreonine modification. Composition is skewed to acidic residues over residues 46 to 117 and 148 to 179; these read GEEE…EAED and GEED…DDEV. Residues 176-239 form a homodimerization region; that stretch reads DDEVPVPSFG…AGARGLGHQS (64 aa).

In terms of assembly, antiparallel homodimer. Interacts with CENPT. Identified in a centromere complex containing histones H2A, H2B and H4, and at least CENPA, CENPB, CENPC, CENPT, CENPN, HJURP, SUPT16H, SSRP1 and RSF1. Post-translationally, poly-ADP-ribosylated by PARP1. In terms of processing, N-terminally methylated by METTL11A/NTM1. Alpha-N-methylation is stimulated in response extracellular stimuli, including increased cell density and heat shock, and seems to facilitate binding to CENP-B boxes. Chromatin-bound CENP-B is primarily trimethylated.

It is found in the nucleus. The protein localises to the chromosome. It localises to the centromere. Functionally, interacts with centromeric heterochromatin in chromosomes and binds to a specific 17 bp subset of alphoid satellite DNA, called the CENP-B box. May organize arrays of centromere satellite DNA into a higher-order structure which then directs centromere formation and kinetochore assembly in mammalian chromosomes. The sequence is that of Major centromere autoantigen B (CENPB) from Ovis aries (Sheep).